Reading from the N-terminus, the 149-residue chain is Acyl carrier protein 1, chloroplastic (149 aa).

A chloroplast-targeting transit peptide spans 1 to 59 (MAHCLAAVSSFSPSAVRRRLSSQVANVVSSRSSVSFHSRQMSFVSISSRPSSLRFKICC). The Carrier domain occupies 69-144 (KETVDKVCMI…DAANLIEKLV (76 aa)). O-(pantetheine 4'-phosphoryl)serine is present on Ser-104.

It belongs to the acyl carrier protein (ACP) family. Post-translationally, 4'-phosphopantetheine is transferred from CoA to a specific serine of apo-ACP by acpS. This modification is essential for activity because fatty acids are bound in thioester linkage to the sulfhydryl of the prosthetic group.

The protein localises to the plastid. It is found in the chloroplast. It functions in the pathway lipid metabolism; fatty acid biosynthesis. Its function is as follows. Carrier of the growing fatty acid chain in fatty acid biosynthesis. This is Acyl carrier protein 1, chloroplastic (ACL1.1) from Hordeum vulgare (Barley).